The following is a 462-amino-acid chain: DIMBOA UDP-glucosyltransferase BX9 (462 aa).

Residue His-24 is the Proton acceptor of the active site. His-24 is an an anthocyanidin binding site. Asp-115 (charge relay) is an active-site residue. Positions 137, 336, 338, 353, 356, 357, 358, and 361 each coordinate UDP-alpha-D-glucose. Gly-376 serves as a coordination point for an anthocyanidin. 2 residues coordinate UDP-alpha-D-glucose: Asp-377 and Gln-378.

This sequence belongs to the UDP-glycosyltransferase family. Requires Mg(2+) as cofactor. Ca(2+) is required as a cofactor. Expressed at the same levels in roots and shoots.

The enzyme catalyses DIMBOA + UDP-alpha-D-glucose = DIMBOA beta-D-glucoside + UDP + H(+). The catalysed reaction is DIBOA + UDP-alpha-D-glucose = DIBOA beta-D-glucoside + UDP + H(+). Glucosyltransferase involved in the last step of benzoxazinoid glucoside biosynthesis. Catalyzes the glucosylation of hydroxamic acids utilizing UDP-glucose as glucose doner, reducing the toxicity of these natural insecticides for storage. Can use DIMBOA and DIBOA as substrates, HMBOA (2-hydroxy-7-methoxy-2H-1,4-benzoxazin-3(4H)-one) and HBOA (2-hydroxy-2H-1,4-benzoxazin-3(4H)-one) with a lower efficiency, but not indole acetic acid or quercitin. The polypeptide is DIMBOA UDP-glucosyltransferase BX9 (BX9) (Zea mays (Maize)).